A 599-amino-acid polypeptide reads, in one-letter code: Purine-uracil permease NCS1 (599 aa).

A run of 12 helical transmembrane segments spans residues 140–160 (LWIG…LVDL), 164–184 (WWQG…PLVL), 218–238 (LVGC…IFLL), 257–277 (TSPL…CIVW), 293–313 (ILIS…GGFG), 327–347 (FWTL…TLAL), 363–383 (IIGQ…GVAV), 411–433 (TLLA…NVVA), 445–465 (FFTF…FQPW), 474–494 (FVYT…GIIL), 525–545 (YNVA…PGFL), and 560–580 (VVYD…YWII).

This sequence belongs to the purine-cytosine permease (2.A.39) family. In terms of tissue distribution, expressed in roots, leaves, stems, flowers, siliques and seeds.

Its subcellular location is the plastid. It localises to the chloroplast envelope. It is found in the chloroplast membrane. In terms of biological role, nucleobase-proton symporter that facilitates the uptake of nucleobases in the cells. Can transport adenine, guanine and uracil. Contributes to uracil import into plastids for plastidic uracil salvage which is essential for plant growth and development. This Arabidopsis thaliana (Mouse-ear cress) protein is Purine-uracil permease NCS1.